A 141-amino-acid polypeptide reads, in one-letter code: Large ribosomal subunit protein uL11 (141 aa).

This sequence belongs to the universal ribosomal protein uL11 family. As to quaternary structure, part of the ribosomal stalk of the 50S ribosomal subunit. Interacts with L10 and the large rRNA to form the base of the stalk. L10 forms an elongated spine to which L12 dimers bind in a sequential fashion forming a multimeric L10(L12)X complex. Post-translationally, one or more lysine residues are methylated.

Forms part of the ribosomal stalk which helps the ribosome interact with GTP-bound translation factors. The polypeptide is Large ribosomal subunit protein uL11 (Thermomicrobium roseum (strain ATCC 27502 / DSM 5159 / P-2)).